The chain runs to 278 residues: Rhomboid protease GlpG (278 aa).

The next 6 membrane-spanning stretches (helical) occupy residues 95 to 115 (GPLT…MQIV), 143 to 163 (AFLH…WYLA), 170 to 190 (LGTG…GWGQ), 192 to 212 (LFSG…MGYV), 224 to 241 (ISLP…LVAG), and 245 to 267 (ILGL…LMAF). S202 acts as the Nucleophile in catalysis. Residue H255 is part of the active site.

The protein belongs to the peptidase S54 family.

Its subcellular location is the cell inner membrane. The enzyme catalyses Cleaves type-1 transmembrane domains using a catalytic dyad composed of serine and histidine that are contributed by different transmembrane domains.. Functionally, rhomboid-type serine protease that catalyzes intramembrane proteolysis. The polypeptide is Rhomboid protease GlpG (Yersinia enterocolitica serotype O:8 / biotype 1B (strain NCTC 13174 / 8081)).